The primary structure comprises 266 residues: Ribosomal RNA small subunit methyltransferase J (266 aa).

S-adenosyl-L-methionine contacts are provided by residues 109-110 (RD), 125-126 (ER), and D185.

It belongs to the methyltransferase superfamily. RsmJ family.

It is found in the cytoplasm. The catalysed reaction is guanosine(1516) in 16S rRNA + S-adenosyl-L-methionine = N(2)-methylguanosine(1516) in 16S rRNA + S-adenosyl-L-homocysteine + H(+). Specifically methylates the guanosine in position 1516 of 16S rRNA. The sequence is that of Ribosomal RNA small subunit methyltransferase J from Cellvibrio japonicus (strain Ueda107) (Pseudomonas fluorescens subsp. cellulosa).